The chain runs to 62 residues: Beta-defensin 133 (62 aa).

The signal sequence occupies residues 1 to 21; that stretch reads MKIHIFLFVLFFFLVPIATRG. 2 disulfide bridges follow: Cys32–Cys60 and Cys39–Cys53.

Belongs to the beta-defensin family.

It is found in the secreted. Has antibacterial activity. This chain is Beta-defensin 133 (DEFB133), found in Pan troglodytes (Chimpanzee).